A 282-amino-acid polypeptide reads, in one-letter code: 2-dehydro-3-deoxyphosphooctonate aldolase (282 aa).

Belongs to the KdsA family.

The protein resides in the cytoplasm. The catalysed reaction is D-arabinose 5-phosphate + phosphoenolpyruvate + H2O = 3-deoxy-alpha-D-manno-2-octulosonate-8-phosphate + phosphate. It participates in carbohydrate biosynthesis; 3-deoxy-D-manno-octulosonate biosynthesis; 3-deoxy-D-manno-octulosonate from D-ribulose 5-phosphate: step 2/3. The protein operates within bacterial outer membrane biogenesis; lipopolysaccharide biosynthesis. The chain is 2-dehydro-3-deoxyphosphooctonate aldolase from Shewanella sp. (strain W3-18-1).